Consider the following 429-residue polypeptide: Putative zinc metalloprotease aq_1964 (429 aa).

Histidine 17 provides a ligand contact to Zn(2+). Residue glutamate 18 is part of the active site. Histidine 21 provides a ligand contact to Zn(2+). The chain crosses the membrane as a helical span at residues 88–110 (ILIALGGPLFNFLFTILVFALVY). The region spanning 189-265 (TIKVPNVQKG…AIKLKILRNG (77 aa)) is the PDZ domain. 2 helical membrane-spanning segments follow: residues 369-391 (IFNL…IEWL) and 406-428 (RVGL…LRLL).

It belongs to the peptidase M50B family. The cofactor is Zn(2+).

The protein localises to the cell inner membrane. The chain is Putative zinc metalloprotease aq_1964 from Aquifex aeolicus (strain VF5).